A 206-amino-acid polypeptide reads, in one-letter code: Non-structural protein 7b (206 aa).

A signal peptide spans 1 to 17 (MIVVILVCIFLANGIKA).

This chain is Non-structural protein 7b, found in Feline coronavirus (strain FIPV WSU-79/1146) (FCoV).